Consider the following 414-residue polypeptide: Bystin (414 aa).

Residues 1–11 are compositionally biased toward basic residues; that stretch reads MSAKRNTKLRH. Residues 1 to 91 form a disordered region; the sequence is MSAKRNTKLR…PSDDEGQADD (91 aa). Over residues 12 to 24 the composition is skewed to basic and acidic residues; sequence APLEHAYVDDKSV. The segment covering 25–34 has biased composition (basic residues); that stretch reads RRNKRSKQRG.

The protein belongs to the bystin family.

The protein resides in the nucleus. Its subcellular location is the nucleolus. Required for processing of 20S pre-rRNA precursor and biogenesis of 40S ribosomal subunits. The polypeptide is Bystin (bysl) (Monosiga brevicollis (Choanoflagellate)).